The primary structure comprises 409 residues: MARAKFERNKPHVNIGTIGHVDHGKTTLTAAITMTLAALGQAAARKYDEIDAAPEEKARGITINTAHVEYETTQRHYAHVDCPGHADYVKNMITGAAQMDGAILVVAATDGAMPQTKEHILLAKQVGVPSIVVFLNKVDQLDDEELLELVELELRELLTSYDFDGDNIPIIRGSGLMALEAMTGNPKTQRGDNEWVDKIYELMDAVDSYIPTPERDVDKPFLMAVEDVFSITGRGTVATGRIERGKVKINDTVEVVGIRETRTTTVTGIEMFKKSLDEGMAGDNAGLLLRGLKKEDIERGMVLAKPGSITPHTEFEGEVYVLTEKEGGRKTPFFAGYRPQFYVRTTDVTGTIKSFTADDGSNAEMVMPGDRIKMNVELINPIAIEQGMRFAIREGGRTIGAGVVSKIVK.

Residues 10 to 214 (KPHVNIGTIG…AVDSYIPTPE (205 aa)) enclose the tr-type G domain. Positions 19-26 (GHVDHGKT) are G1. A GTP-binding site is contributed by 19 to 26 (GHVDHGKT). Threonine 26 provides a ligand contact to Mg(2+). The segment at 60–64 (GITIN) is G2. Positions 81–84 (DCPG) are G3. GTP is bound by residues 81-85 (DCPGH) and 136-139 (NKVD). The interval 136-139 (NKVD) is G4. The segment at 174–176 (SGL) is G5.

Belongs to the TRAFAC class translation factor GTPase superfamily. Classic translation factor GTPase family. EF-Tu/EF-1A subfamily. As to quaternary structure, monomer.

The protein resides in the cytoplasm. The enzyme catalyses GTP + H2O = GDP + phosphate + H(+). In terms of biological role, GTP hydrolase that promotes the GTP-dependent binding of aminoacyl-tRNA to the A-site of ribosomes during protein biosynthesis. The polypeptide is Elongation factor Tu (Cyanothece sp. (strain PCC 7425 / ATCC 29141)).